The sequence spans 183 residues: Ribosome-recycling factor (183 aa).

Belongs to the RRF family.

Its subcellular location is the cytoplasm. In terms of biological role, responsible for the release of ribosomes from messenger RNA at the termination of protein biosynthesis. May increase the efficiency of translation by recycling ribosomes from one round of translation to another. This is Ribosome-recycling factor from Acetivibrio thermocellus (strain ATCC 27405 / DSM 1237 / JCM 9322 / NBRC 103400 / NCIMB 10682 / NRRL B-4536 / VPI 7372) (Clostridium thermocellum).